Consider the following 157-residue polypeptide: Putative gamma-glutamylcyclotransferase CG2811 (157 aa).

14-17 (YGTL) lines the substrate pocket. Glu-89 serves as the catalytic Proton acceptor.

Belongs to the gamma-glutamylcyclotransferase family.

In terms of biological role, putative gamma-glutamylcyclotransferase. This is Putative gamma-glutamylcyclotransferase CG2811 from Drosophila melanogaster (Fruit fly).